The chain runs to 165 residues: MYIEMVDETGQVSEEILKQTQEILEFAAQKTGKENKEMAVTFVSNERSHELNLEYRDTDRPTDVISLEYKPELDIAVDEEDLLDHPELAEMLEDFDAYIGELFISVDKAREQAEEYGHSFEREMGFLAVHGFLHINGYDHYTPEEEAEMFGLQEEILTAYGLTRK.

Positions 130, 134, and 140 each coordinate Zn(2+).

The protein belongs to the endoribonuclease YbeY family. Zn(2+) is required as a cofactor.

It localises to the cytoplasm. Functionally, single strand-specific metallo-endoribonuclease involved in late-stage 70S ribosome quality control and in maturation of the 3' terminus of the 16S rRNA. This Streptococcus sanguinis (strain SK36) protein is Endoribonuclease YbeY.